Here is a 186-residue protein sequence, read N- to C-terminus: Periplasmic nitrate reductase, electron transfer subunit (186 aa).

The N-terminal stretch at 1–20 (MKTSKLNFLTLVASTGLALA) is a signal peptide. Positions 87, 102, 105, 106, 123, 144, 147, and 148 each coordinate heme c.

This sequence belongs to the NapB family. Component of the periplasmic nitrate reductase NapAB complex composed of NapA and NapB. Post-translationally, binds 2 heme C groups per subunit.

The protein resides in the periplasm. In terms of biological role, electron transfer subunit of the periplasmic nitrate reductase complex NapAB. Transfers electrons to NapA subunit, thus allowing electron flow between membrane and periplasm. Essential for periplasmic nitrate reduction with nitrate as the terminal electron acceptor. This chain is Periplasmic nitrate reductase, electron transfer subunit, found in Wolinella succinogenes (strain ATCC 29543 / DSM 1740 / CCUG 13145 / JCM 31913 / LMG 7466 / NCTC 11488 / FDC 602W) (Vibrio succinogenes).